The chain runs to 876 residues: Alanine--tRNA ligase (876 aa).

Lys-74 is modified (N6-acetyllysine). Zn(2+)-binding residues include His-564, His-568, Cys-666, and His-670.

The protein belongs to the class-II aminoacyl-tRNA synthetase family. Homotetramer. It depends on Zn(2+) as a cofactor.

It is found in the cytoplasm. The enzyme catalyses tRNA(Ala) + L-alanine + ATP = L-alanyl-tRNA(Ala) + AMP + diphosphate. Functionally, catalyzes the attachment of alanine to tRNA(Ala) in a two-step reaction: alanine is first activated by ATP to form Ala-AMP and then transferred to the acceptor end of tRNA(Ala). Also edits incorrectly charged Ser-tRNA(Ala) and Gly-tRNA(Ala) via its editing domain. The protein is Alanine--tRNA ligase of Shigella sonnei (strain Ss046).